Here is a 562-residue protein sequence, read N- to C-terminus: MAAQLGLPLVSCHRGASQAASSSAHLVPGASAIMQAGNRRQKMRAPALRDRVVFARVVPVDGSVGFAGSSTEQETAVESATPTAVPSKVVLGRSSFPRGFIFGAASAAYQVEGAWNEGGRGPSIWDTFTHDHPEKIADHSNGDKATDSYKKYKEDVKLLKDLGLDSYRFSISWSRILPKGTLQGGINQEGIQYYNDLINELLKNGIRPMVTLFHWDVPQALEDSYKGFRSSEIVNDFKDYADICFKEFGDRVKHWITLNEPWSLSTMGYAFGRHAPGRCSTWYGCPAGDSANEPYEVTHNLLLAHANAVKIYRDNYKATQNGEIGITLNSLWYEPYSKSHEDVEAATRALDFMFGWYMDPLVNGDYPFIMRALVRDRLPFFTHAESELIKGSYDFIGINYYTSNYAQHAPVTEDHTPDNSYFDSYVNQSGEKNGVPIGPLQGSWIYFYPRGLKELLLYVKRRYCNPKIYITENGTAEVEKEKGVPLHDPERKEYLTYHLAQVLQAIREGVRVKGHFTWALTDNFEWDKGYTERFGLIYIDYDKDFNRQPKDSTKWFSKFLRT.

A chloroplast-targeting transit peptide spans 1-44 (MAAQLGLPLVSCHRGASQAASSSAHLVPGASAIMQAGNRRQKMR). Residues Gln-110, His-214, and 259 to 260 (NE) contribute to the a beta-D-glucoside site. The active-site Proton donor is the Glu-260. Residues Cys-279 and Cys-285 are joined by a disulfide bond. A beta-D-glucoside is bound by residues Tyr-401, Glu-472, Trp-518, 525-526 (EW), and Phe-534. Glu-472 (nucleophile) is an active-site residue.

The protein belongs to the glycosyl hydrolase 1 family. In terms of assembly, heterodimer. The N-terminus of the larger subunit is blocked and the smaller subunit might be derived from the larger one.

It localises to the plastid. The protein resides in the chloroplast. The catalysed reaction is protodioscin + H2O = 26-deglucoprotodioscin + D-glucose. Its activity is regulated as follows. Partially inhibited by glucono-1,5-lactone, conduritol beta-epoxide and diosgenin, but not by beta-sitosterol or cholesterol. In terms of biological role, beta-glucosidase involved in saponin metabolism. Highly specific for the cleavage of C-26-bound glucose moiety of furostanol glycosides such as protogracillin and protodioscin. No activity with nuatigenin glycoside. Convers furostanol glycosides to spirostanol glycosides. In Hellenia speciosa (Crepe ginger), this protein is Furostanol glycoside 26-O-beta-glucosidase.